A 498-amino-acid chain; its full sequence is ATP synthase subunit beta, chloroplastic (498 aa).

T6 bears the Phosphothreonine mark. At S13 the chain carries Phosphoserine. ATP is bound at residue 172–179 (GGAGVGKT).

The protein belongs to the ATPase alpha/beta chains family. As to quaternary structure, F-type ATPases have 2 components, CF(1) - the catalytic core - and CF(0) - the membrane proton channel. CF(1) has five subunits: alpha(3), beta(3), gamma(1), delta(1), epsilon(1). CF(0) has four main subunits: a(1), b(1), b'(1) and c(9-12).

It is found in the plastid. Its subcellular location is the chloroplast thylakoid membrane. It carries out the reaction ATP + H2O + 4 H(+)(in) = ADP + phosphate + 5 H(+)(out). Produces ATP from ADP in the presence of a proton gradient across the membrane. The catalytic sites are hosted primarily by the beta subunits. The protein is ATP synthase subunit beta, chloroplastic of Crucihimalaya wallichii (Rock-cress).